A 396-amino-acid polypeptide reads, in one-letter code: Tryptophan synthase beta chain (396 aa).

The residue at position 86 (K86) is an N6-(pyridoxal phosphate)lysine.

This sequence belongs to the TrpB family. Tetramer of two alpha and two beta chains. It depends on pyridoxal 5'-phosphate as a cofactor.

The catalysed reaction is (1S,2R)-1-C-(indol-3-yl)glycerol 3-phosphate + L-serine = D-glyceraldehyde 3-phosphate + L-tryptophan + H2O. The protein operates within amino-acid biosynthesis; L-tryptophan biosynthesis; L-tryptophan from chorismate: step 5/5. Functionally, the beta subunit is responsible for the synthesis of L-tryptophan from indole and L-serine. This chain is Tryptophan synthase beta chain, found in Blochmanniella pennsylvanica (strain BPEN).